The sequence spans 556 residues: Vacuolar protein 8 (556 aa).

Glycine 2 carries N-myristoyl glycine lipidation. 3 S-palmitoyl cysteine lipidation sites follow: cysteine 4, cysteine 5, and cysteine 7. ARM repeat units lie at residues 38–74 (NRSE…AFAE), 75–115 (VTEK…NLAV), 117–156 (DSNK…NLAT), 158–197 (DQNK…NMTH), 199–238 (LENR…NIAV), 242–281 (NRKK…NLAS), 283–322 (ANYQ…NISI), 324–364 (PLNE…NLAA), and 408–447 (DDLK…NLCS).

Belongs to the beta-catenin family.

It localises to the vacuole membrane. Functions in both vacuole inheritance and protein targeting from the cytoplasm to vacuole. The protein is Vacuolar protein 8 (VAC8) of Komagataella pastoris (Yeast).